The chain runs to 476 residues: Raffinose invertase (476 aa).

Substrate-binding positions include 35 to 38, Gln54, 97 to 98, 159 to 160, Glu214, and Trp297; these read WMND, FS, and RD. Residue Asp38 is part of the active site.

This sequence belongs to the glycosyl hydrolase 32 family. Homodimer.

It catalyses the reaction Hydrolysis of terminal non-reducing beta-D-fructofuranoside residues in beta-D-fructofuranosides.. Functionally, may prevent the potential hasard of excessive sucrose accumulation. The sequence is that of Raffinose invertase (rafD) from Escherichia coli.